A 454-amino-acid chain; its full sequence is Light-independent protochlorophyllide reductase subunit N (454 aa).

The [4Fe-4S] cluster site is built by C22, C47, and C107.

Belongs to the BchN/ChlN family. As to quaternary structure, protochlorophyllide reductase is composed of three subunits; ChlL, ChlN and ChlB. Forms a heterotetramer of two ChlB and two ChlN subunits. [4Fe-4S] cluster serves as cofactor.

The protein resides in the plastid. Its subcellular location is the chloroplast. It carries out the reaction chlorophyllide a + oxidized 2[4Fe-4S]-[ferredoxin] + 2 ADP + 2 phosphate = protochlorophyllide a + reduced 2[4Fe-4S]-[ferredoxin] + 2 ATP + 2 H2O. Its pathway is porphyrin-containing compound metabolism; chlorophyll biosynthesis (light-independent). Component of the dark-operative protochlorophyllide reductase (DPOR) that uses Mg-ATP and reduced ferredoxin to reduce ring D of protochlorophyllide (Pchlide) to form chlorophyllide a (Chlide). This reaction is light-independent. The NB-protein (ChlN-ChlB) is the catalytic component of the complex. This is Light-independent protochlorophyllide reductase subunit N from Cycas taitungensis (Prince sago).